A 73-amino-acid polypeptide reads, in one-letter code: Putative antitoxin VapB21 (73 aa).

The protein belongs to the UPF0330 family.

Possibly the antitoxin component of a type II toxin-antitoxin (TA) system. Its cognate toxin is VapC21 (Potential). In Sulfurisphaera tokodaii (strain DSM 16993 / JCM 10545 / NBRC 100140 / 7) (Sulfolobus tokodaii), this protein is Putative antitoxin VapB21 (vapB21).